We begin with the raw amino-acid sequence, 145 residues long: Acidic phospholipase A2 1 (145 aa).

Positions 1–21 are cleaved as a signal peptide; the sequence is MYPAHLLVLLAVCVSLLGATA. The propeptide occupies 22 to 27; it reads IPPLPL. 7 disulfide bridges follow: cysteine 38–cysteine 98, cysteine 54–cysteine 144, cysteine 56–cysteine 72, cysteine 71–cysteine 125, cysteine 78–cysteine 118, cysteine 87–cysteine 111, and cysteine 105–cysteine 116. Ca(2+)-binding residues include tyrosine 55, glycine 57, and glycine 59. The active site involves histidine 75. Ca(2+) is bound at residue aspartate 76. Residue aspartate 119 is part of the active site.

This sequence belongs to the phospholipase A2 family. Group I subfamily. D49 sub-subfamily. As to quaternary structure, monomer. It depends on Ca(2+) as a cofactor. In terms of tissue distribution, expressed by the venom gland.

Its subcellular location is the secreted. It carries out the reaction a 1,2-diacyl-sn-glycero-3-phosphocholine + H2O = a 1-acyl-sn-glycero-3-phosphocholine + a fatty acid + H(+). Its function is as follows. PLA2 catalyzes the calcium-dependent hydrolysis of the 2-acyl groups in 3-sn-phosphoglycerides. This Laticauda semifasciata (Black-banded sea krait) protein is Acidic phospholipase A2 1.